Consider the following 323-residue polypeptide: Beta-ketoacyl-[acyl-carrier-protein] synthase III (323 aa).

Active-site residues include Cys-113 and His-250. The segment at 251-255 (QANKR) is ACP-binding. Asn-280 is an active-site residue.

It belongs to the thiolase-like superfamily. FabH family. As to quaternary structure, homodimer.

The protein resides in the cytoplasm. It catalyses the reaction malonyl-[ACP] + acetyl-CoA + H(+) = 3-oxobutanoyl-[ACP] + CO2 + CoA. The protein operates within lipid metabolism; fatty acid biosynthesis. Its function is as follows. Catalyzes the condensation reaction of fatty acid synthesis by the addition to an acyl acceptor of two carbons from malonyl-ACP. Catalyzes the first condensation reaction which initiates fatty acid synthesis and may therefore play a role in governing the total rate of fatty acid production. Possesses both acetoacetyl-ACP synthase and acetyl transacylase activities. Its substrate specificity determines the biosynthesis of branched-chain and/or straight-chain of fatty acids. The sequence is that of Beta-ketoacyl-[acyl-carrier-protein] synthase III from Brucella suis (strain ATCC 23445 / NCTC 10510).